A 754-amino-acid polypeptide reads, in one-letter code: 1,4-alpha-glucan branching enzyme GlgB (754 aa).

Asp-431 functions as the Nucleophile in the catalytic mechanism. Glu-484 serves as the catalytic Proton donor.

Belongs to the glycosyl hydrolase 13 family. GlgB subfamily. As to quaternary structure, monomer.

The enzyme catalyses Transfers a segment of a (1-&gt;4)-alpha-D-glucan chain to a primary hydroxy group in a similar glucan chain.. Its pathway is glycan biosynthesis; glycogen biosynthesis. Functionally, catalyzes the formation of the alpha-1,6-glucosidic linkages in glycogen by scission of a 1,4-alpha-linked oligosaccharide from growing alpha-1,4-glucan chains and the subsequent attachment of the oligosaccharide to the alpha-1,6 position. This Prochlorococcus marinus subsp. pastoris (strain CCMP1986 / NIES-2087 / MED4) protein is 1,4-alpha-glucan branching enzyme GlgB.